A 401-amino-acid chain; its full sequence is 8-amino-7-oxononanoate synthase (401 aa).

Arg24 contributes to the substrate binding site. Pyridoxal 5'-phosphate is bound at residue 111 to 112 (GF). His137 contributes to the substrate binding site. Ser183, His211, and Thr240 together coordinate pyridoxal 5'-phosphate. Lys243 is modified (N6-(pyridoxal phosphate)lysine). Position 357 (Thr357) interacts with substrate.

This sequence belongs to the class-II pyridoxal-phosphate-dependent aminotransferase family. BioF subfamily. In terms of assembly, homodimer. Pyridoxal 5'-phosphate serves as cofactor.

It carries out the reaction 6-carboxyhexanoyl-[ACP] + L-alanine + H(+) = (8S)-8-amino-7-oxononanoate + holo-[ACP] + CO2. Its pathway is cofactor biosynthesis; biotin biosynthesis. Functionally, catalyzes the decarboxylative condensation of pimeloyl-[acyl-carrier protein] and L-alanine to produce 8-amino-7-oxononanoate (AON), [acyl-carrier protein], and carbon dioxide. In Xylella fastidiosa (strain M23), this protein is 8-amino-7-oxononanoate synthase.